We begin with the raw amino-acid sequence, 44 residues long: Benzaldehyde dehydrogenase [NAD(+)] II (44 aa).

The protein belongs to the aldehyde dehydrogenase family.

The enzyme catalyses benzaldehyde + NAD(+) + H2O = benzoate + NADH + 2 H(+). The polypeptide is Benzaldehyde dehydrogenase [NAD(+)] II (Acinetobacter guillouiae (Acinetobacter genomosp. 11)).